The sequence spans 406 residues: 2,3-bisphosphoglycerate-independent phosphoglycerate mutase (406 aa).

Belongs to the BPG-independent phosphoglycerate mutase family. A-PGAM subfamily.

The catalysed reaction is (2R)-2-phosphoglycerate = (2R)-3-phosphoglycerate. It functions in the pathway carbohydrate degradation; glycolysis; pyruvate from D-glyceraldehyde 3-phosphate: step 3/5. Catalyzes the interconversion of 2-phosphoglycerate and 3-phosphoglycerate. The chain is 2,3-bisphosphoglycerate-independent phosphoglycerate mutase from Methanococcus vannielii (strain ATCC 35089 / DSM 1224 / JCM 13029 / OCM 148 / SB).